A 240-amino-acid polypeptide reads, in one-letter code: Small ribosomal subunit protein uS3 (240 aa).

Residues 39-109 (IRQYVEKNLS…QIRINVVEVA (71 aa)) enclose the KH type-2 domain. The segment at 214–240 (EEQAPAQPATTPKRQRRRQQFEDRSNE) is disordered.

The protein belongs to the universal ribosomal protein uS3 family. In terms of assembly, part of the 30S ribosomal subunit. Forms a tight complex with proteins S10 and S14.

Binds the lower part of the 30S subunit head. Binds mRNA in the 70S ribosome, positioning it for translation. The protein is Small ribosomal subunit protein uS3 of Gloeothece citriformis (strain PCC 7424) (Cyanothece sp. (strain PCC 7424)).